The sequence spans 80 residues: Raniseptin-6 (80 aa).

The signal sequence occupies residues 1 to 22; sequence MAFLKKSLFLVLFLGIVSLSIC. Residues 23-49 constitute a propeptide that is removed on maturation; that stretch reads EEEKREGEEEEKQEEENEELSEEELRE.

The protein belongs to the frog skin active peptide (FSAP) family. Dermaseptin subfamily. As to expression, expressed by the skin glands.

The protein localises to the secreted. In terms of biological role, has antibacterial activity. The protein is Raniseptin-6 of Boana raniceps (Chaco tree frog).